The primary structure comprises 1270 residues: MSSNTENQRVNFASIKNPMKYPDFLEVQLKSFQDFLQLDTPPEKRKNDGLYKVFAENFPIADTRNNFVLEFLDYYIDPPHYSIDECLERGLTYSVPLKAKLKLYCTDPDHEDFDTVIQDVYLGPIPYMTPKGTFVINGAERVVVSQLHRSPGVFFGQSVHANGTKLYSARIIPFKGSWIEFATDINNVMYAYIDRKKKLPVTTLLRAVGFENDKDILEIFNLAEDVKVNKTNLKKVVGRKLAARVLKTWTEDFVDEDTGEVVSIERNEVIIDRETVIEEDHIDEIIDSGVQNILVHKEEANSSDYSIIFNTLQKDPSNSEKEAVLYIYRQLRNADPADDASAREVINNLFFSEKRYDLGEVGRYRINKKLGLTTDMDVKVLTKQDIIEIIKYLIELINSKADVDDIDHLSNRRVRTVGEQLSNQFAIGLARMSRTIRERMNVRDNEVFTPIDLINAKTISSVINSFFGTNALSQFMDQTNPLAEITHKRRLSALGPGGLSRERAGFEVRDVHYTHYGRLCPIETPEGPNIGLISSLCVYAKINELGFISTPYRKVADGKVDISDEGIEYLTAEEEEDKIIAQGNAPLDDEGKFVREKVKARRDADYPVVTPDQVELMDVSPQQIASIAASLIPFLEHDDANRALMGSNMMRQAVPLLRTEAPIVGTGIEKQLVEDSRTQIAAEGDGVVEYVDATTIRILYDRNEDEEFVSFEPALKEYRIPKFRKTNQSMTIDLRPTCDKGQRVKKGDILTEGYSTQGGELALGKNLLVAYMPWKGYNYEDAIVLNERVVREDLLTSVHVDEYILEVRETKRGMEELTSDIPNVSEEATKDLDENGIVRVGARIEPGDILIGKITPKGESDPSPEEKLLRAIFGDKAGDVKDASLKASPSLRGVVIDKKLFSRVIKSRSEKNADKAILPKLNDEFEEKAAKLKDILIEKLLVLTNGKVSQGVKDYLGTEVIAKGAKFTKRDLESLDYTIIQLSKWTADAHKNDMIRDLVMNYLKKYKELDAELKRKKFAITIGDELPAGIIQMAKVYIAKKRKIGVGDKMAGRHGNKGIVSRVVRQEDMPFLADGTPVDIVLNPLGVPSRMNIGQIFEAVLGRAGKELGVKFATPIFDGASMDDLNEWTDKAGLPRYCKTYLCDGGTGERFDQPATVGVTYMLKLGHMVEDKMHARSIGPYSLITQQPLGGKAQFGGQRFGEMEVWALEAFGAAHILQEILTIKSDDVVGRSKAYEAIVKGEPMPTPGIPESLNVLLHELRGLGLSINLE.

It belongs to the RNA polymerase beta chain family. The RNAP catalytic core consists of 2 alpha, 1 beta, 1 beta' and 1 omega subunit. When a sigma factor is associated with the core the holoenzyme is formed, which can initiate transcription.

The enzyme catalyses RNA(n) + a ribonucleoside 5'-triphosphate = RNA(n+1) + diphosphate. DNA-dependent RNA polymerase catalyzes the transcription of DNA into RNA using the four ribonucleoside triphosphates as substrates. This is DNA-directed RNA polymerase subunit beta from Phocaeicola vulgatus (strain ATCC 8482 / DSM 1447 / JCM 5826 / CCUG 4940 / NBRC 14291 / NCTC 11154) (Bacteroides vulgatus).